We begin with the raw amino-acid sequence, 520 residues long: Probable glycine dehydrogenase (decarboxylating) subunit 2 (520 aa).

The interval 1-29 (MWRQSRWNEPLITEMSRRGRRGALPPRPD) is disordered. N6-(pyridoxal phosphate)lysine is present on K279.

Belongs to the GcvP family. C-terminal subunit subfamily. In terms of assembly, the glycine cleavage system is composed of four proteins: P, T, L and H. In this organism, the P 'protein' is a heterodimer of two subunits. Pyridoxal 5'-phosphate is required as a cofactor.

The enzyme catalyses N(6)-[(R)-lipoyl]-L-lysyl-[glycine-cleavage complex H protein] + glycine + H(+) = N(6)-[(R)-S(8)-aminomethyldihydrolipoyl]-L-lysyl-[glycine-cleavage complex H protein] + CO2. In terms of biological role, the glycine cleavage system catalyzes the degradation of glycine. The P protein binds the alpha-amino group of glycine through its pyridoxal phosphate cofactor; CO(2) is released and the remaining methylamine moiety is then transferred to the lipoamide cofactor of the H protein. The sequence is that of Probable glycine dehydrogenase (decarboxylating) subunit 2 from Aeropyrum pernix (strain ATCC 700893 / DSM 11879 / JCM 9820 / NBRC 100138 / K1).